Consider the following 574-residue polypeptide: Sulfate adenylyltransferase (574 aa).

The segment at 1–170 (MANAPHGGVL…VQAVSKPAYY (170 aa)) is N-terminal. Positions 171-395 (DYVALRYTPA…LRESYPPKAK (225 aa)) are catalytic. Glutamine 198 serves as a coordination point for sulfate. Residues 198–201 (QTRN) and 292–295 (GRDH) each bind ATP. Residues threonine 199, arginine 200, and asparagine 201 contribute to the active site. Position 200 (arginine 200) interacts with sulfate. Alanine 296 serves as a coordination point for sulfate. Methionine 334 lines the ATP pocket. The tract at residues 396–574 (QGFTLFLTGL…ILLLEAQSLI (179 aa)) is allosteric regulation domain; adenylyl-sulfate kinase-like. 3'-phosphoadenylyl sulfate-binding positions include 435–438 (ETVR), arginine 452, 478–479 (IA), and lysine 519.

It in the N-terminal section; belongs to the sulfate adenylyltransferase family. In the C-terminal section; belongs to the APS kinase family. In terms of assembly, homohexamer. Dimer of trimers.

Its subcellular location is the cytoplasm. It carries out the reaction sulfate + ATP + H(+) = adenosine 5'-phosphosulfate + diphosphate. It functions in the pathway sulfur metabolism; hydrogen sulfide biosynthesis; sulfite from sulfate: step 1/3. Its activity is regulated as follows. Allosterically inhibited by 3'-phosphoadenosine 5'-phosphosulfate (PAPS). In terms of biological role, catalyzes the first intracellular reaction of sulfate assimilation, forming adenosine-5'-phosphosulfate (APS) from inorganic sulfate and ATP. Plays an important role in sulfate activation as a component of the biosynthesis pathway of sulfur-containing amino acids. The chain is Sulfate adenylyltransferase from Mycosarcoma maydis (Corn smut fungus).